We begin with the raw amino-acid sequence, 250 residues long: Cell division protein FtsQ (250 aa).

The Cytoplasmic segment spans residues 1-11 (MWNNVRQLNLA). The helical transmembrane segment at 12-32 (ASALYALLLLVLAAAGCYWLI) threads the bilayer. Residues 33-250 (QRPAFALREI…FLTDTDKGKK (218 aa)) are Periplasmic-facing. The POTRA domain occupies 37–106 (FALREIRIDG…NALAVTLEEY (70 aa)).

Belongs to the FtsQ/DivIB family. FtsQ subfamily. Part of a complex composed of FtsB, FtsL and FtsQ.

It localises to the cell inner membrane. Its function is as follows. Essential cell division protein. May link together the upstream cell division proteins, which are predominantly cytoplasmic, with the downstream cell division proteins, which are predominantly periplasmic. May control correct divisome assembly. In Burkholderia pseudomallei (strain K96243), this protein is Cell division protein FtsQ.